The chain runs to 159 residues: Cyclic pyranopterin monophosphate synthase (159 aa).

Substrate is bound by residues 75 to 77 (LCH) and 113 to 114 (ME). Residue aspartate 128 is part of the active site.

This sequence belongs to the MoaC family. Homohexamer; trimer of dimers.

It catalyses the reaction (8S)-3',8-cyclo-7,8-dihydroguanosine 5'-triphosphate = cyclic pyranopterin phosphate + diphosphate. It functions in the pathway cofactor biosynthesis; molybdopterin biosynthesis. Catalyzes the conversion of (8S)-3',8-cyclo-7,8-dihydroguanosine 5'-triphosphate to cyclic pyranopterin monophosphate (cPMP). The chain is Cyclic pyranopterin monophosphate synthase from Photorhabdus laumondii subsp. laumondii (strain DSM 15139 / CIP 105565 / TT01) (Photorhabdus luminescens subsp. laumondii).